Reading from the N-terminus, the 122-residue chain is Large ribosomal subunit protein uL14 (122 aa).

The protein belongs to the universal ribosomal protein uL14 family. In terms of assembly, part of the 50S ribosomal subunit. Forms a cluster with proteins L3 and L19. In the 70S ribosome, L14 and L19 interact and together make contacts with the 16S rRNA in bridges B5 and B8.

In terms of biological role, binds to 23S rRNA. Forms part of two intersubunit bridges in the 70S ribosome. The protein is Large ribosomal subunit protein uL14 of Alteromonas mediterranea (strain DSM 17117 / CIP 110805 / LMG 28347 / Deep ecotype).